The chain runs to 371 residues: Carnitine monooxygenase oxygenase subunit (371 aa).

One can recognise a Rieske domain in the interval 44-152 (WICVAHSSEL…VEEYAGFLFI (109 aa)). [2Fe-2S] cluster-binding residues include cysteine 86, histidine 88, cysteine 106, and histidine 109. The Fe cation site is built by histidine 208, histidine 213, and aspartate 323.

Belongs to the bacterial ring-hydroxylating dioxygenase alpha subunit family. CntA subfamily. As to quaternary structure, composed of an oxygenase subunit (cntA) and a reductase subunit (cntB). [2Fe-2S] cluster is required as a cofactor. It depends on Fe cation as a cofactor.

The enzyme catalyses (R)-carnitine + NADH + O2 + H(+) = (3R)-3-hydroxy-4-oxobutanoate + trimethylamine + NAD(+) + H2O. It carries out the reaction (R)-carnitine + NADPH + O2 + H(+) = (3R)-3-hydroxy-4-oxobutanoate + trimethylamine + NADP(+) + H2O. It functions in the pathway amine and polyamine metabolism; carnitine metabolism. In terms of biological role, converts carnitine to trimethylamine and malic semialdehyde. The protein is Carnitine monooxygenase oxygenase subunit of Acinetobacter baumannii (strain ATCC 19606 / DSM 30007 / JCM 6841 / CCUG 19606 / CIP 70.34 / NBRC 109757 / NCIMB 12457 / NCTC 12156 / 81).